A 144-amino-acid polypeptide reads, in one-letter code: Large ribosomal subunit protein uL11 (144 aa).

Belongs to the universal ribosomal protein uL11 family. Part of the ribosomal stalk of the 50S ribosomal subunit. Interacts with L10 and the large rRNA to form the base of the stalk. L10 forms an elongated spine to which L12 dimers bind in a sequential fashion forming a multimeric L10(L12)X complex. One or more lysine residues are methylated.

Its function is as follows. Forms part of the ribosomal stalk which helps the ribosome interact with GTP-bound translation factors. The polypeptide is Large ribosomal subunit protein uL11 (Parafrankia sp. (strain EAN1pec)).